The following is a 141-amino-acid chain: Hemoglobin subunit alpha (141 aa).

One can recognise a Globin domain in the interval 1–141 (VLSDKDKTNV…VSTVLTSKYR (141 aa)). At Ser3 the chain carries Phosphoserine. At Lys7 the chain carries N6-succinyllysine. Phosphothreonine is present on Thr8. Lys11 is modified (N6-succinyllysine). N6-acetyllysine; alternate is present on Lys16. Lys16 carries the N6-succinyllysine; alternate modification. Tyr24 carries the phosphotyrosine modification. Residue Ser35 is modified to Phosphoserine. Lys40 carries the N6-succinyllysine modification. Ser49 bears the Phosphoserine mark. His58 is a binding site for O2. His87 is a binding site for heme b. Residue Ser102 is modified to Phosphoserine. Residue Thr108 is modified to Phosphothreonine. Position 124 is a phosphoserine (Ser124). A phosphothreonine mark is found at Thr134 and Thr137. Position 138 is a phosphoserine (Ser138).

It belongs to the globin family. In terms of assembly, heterotetramer of two alpha chains and two beta chains. In terms of tissue distribution, red blood cells.

Involved in oxygen transport from the lung to the various peripheral tissues. In terms of biological role, hemopressin acts as an antagonist peptide of the cannabinoid receptor CNR1. Hemopressin-binding efficiently blocks cannabinoid receptor CNR1 and subsequent signaling. The polypeptide is Hemoglobin subunit alpha (HBA) (Elephas maximus (Indian elephant)).